Reading from the N-terminus, the 486-residue chain is Ribulose bisphosphate carboxylase large chain 3 (486 aa).

Substrate is bound by residues Asn125 and Thr175. The active-site Proton acceptor is the Lys177. A substrate-binding site is contributed by Lys179. Residues Lys203, Asp205, and Glu206 each coordinate Mg(2+). Position 203 is an N6-carboxylysine (Lys203). Residue His295 is the Proton acceptor of the active site. Residues Arg296, His328, and Ser380 each contribute to the substrate site.

Belongs to the RuBisCO large chain family. Type I subfamily. As to quaternary structure, heterohexadecamer of 8 large chains and 8 small chains. Mg(2+) serves as cofactor.

The catalysed reaction is 2 (2R)-3-phosphoglycerate + 2 H(+) = D-ribulose 1,5-bisphosphate + CO2 + H2O. It carries out the reaction D-ribulose 1,5-bisphosphate + O2 = 2-phosphoglycolate + (2R)-3-phosphoglycerate + 2 H(+). RuBisCO catalyzes two reactions: the carboxylation of D-ribulose 1,5-bisphosphate, the primary event in carbon dioxide fixation, as well as the oxidative fragmentation of the pentose substrate. Both reactions occur simultaneously and in competition at the same active site. The sequence is that of Ribulose bisphosphate carboxylase large chain 3 from Bradyrhizobium sp. (strain BTAi1 / ATCC BAA-1182).